Consider the following 289-residue polypeptide: Diaminopimelate epimerase (289 aa).

Asn-17, Gln-47, and Asn-67 together coordinate substrate. Cys-76 serves as the catalytic Proton donor. Substrate-binding positions include 77-78, Asn-164, Asn-198, and 216-217; these read GN and ER. Residue Cys-225 is the Proton acceptor of the active site. Position 226–227 (226–227) interacts with substrate; sequence GS.

This sequence belongs to the diaminopimelate epimerase family. As to quaternary structure, homodimer.

Its subcellular location is the cytoplasm. The enzyme catalyses (2S,6S)-2,6-diaminopimelate = meso-2,6-diaminopimelate. It functions in the pathway amino-acid biosynthesis; L-lysine biosynthesis via DAP pathway; DL-2,6-diaminopimelate from LL-2,6-diaminopimelate: step 1/1. Functionally, catalyzes the stereoinversion of LL-2,6-diaminopimelate (L,L-DAP) to meso-diaminopimelate (meso-DAP), a precursor of L-lysine and an essential component of the bacterial peptidoglycan. This is Diaminopimelate epimerase from Bradyrhizobium sp. (strain ORS 278).